The chain runs to 118 residues: Small ribosomal subunit protein uS13 (118 aa).

Positions 94–118 (GLPVRGQRTKTNARTRKGPRKPIKK) are disordered.

The protein belongs to the universal ribosomal protein uS13 family. In terms of assembly, part of the 30S ribosomal subunit. Forms a loose heterodimer with protein S19. Forms two bridges to the 50S subunit in the 70S ribosome.

Its function is as follows. Located at the top of the head of the 30S subunit, it contacts several helices of the 16S rRNA. In the 70S ribosome it contacts the 23S rRNA (bridge B1a) and protein L5 of the 50S subunit (bridge B1b), connecting the 2 subunits; these bridges are implicated in subunit movement. Contacts the tRNAs in the A and P-sites. The polypeptide is Small ribosomal subunit protein uS13 (Erwinia tasmaniensis (strain DSM 17950 / CFBP 7177 / CIP 109463 / NCPPB 4357 / Et1/99)).